The sequence spans 512 residues: Neuronal acetylcholine receptor subunit alpha-2 (512 aa).

The N-terminal stretch at 1-27 (MAPSHPAFQFWIHLYLWCLLLMPAVLA) is a signal peptide. At 28 to 241 (QQGSHTHAED…VTYYFVIRRL (214 aa)) the chain is on the extracellular side. Residues asparagine 56 and asparagine 106 are each glycosylated (N-linked (GlcNAc...) asparagine). Cysteines 160 and 174 form a disulfide. An N-linked (GlcNAc...) asparagine glycan is attached at asparagine 212. A disulfide bridge connects residues cysteine 224 and cysteine 225. 3 helical membrane-spanning segments follow: residues 242 to 266 (PLFY…VFYL), 274 to 292 (ITLC…LLIT), and 308 to 329 (YLLF…VLNV). At 330-485 (HHRSPSTHNM…WKYVAMVVDR (156 aa)) the chain is on the cytoplasmic side. A helical transmembrane segment spans residues 486–504 (IFLWLFIIVCFLGTIGLFL).

This sequence belongs to the ligand-gated ion channel (TC 1.A.9) family. Acetylcholine receptor (TC 1.A.9.1) subfamily. Alpha-2/CHRNA2 sub-subfamily. As to quaternary structure, neuronal AChR is composed of two different types of subunits: alpha and non-alpha (beta). CHRNA2/alpha-2 subunit can be combined to CHRNB2/beta-2 or CHRNB4/beta-4 to give rise to functional receptors. Both CHRNA2:CHRNB2 and CHRNA2:CHRNB4 nAChR complexes are heteropentamers with two subtypes: LS (low agonist sensitivity) with a (CHRNA2)3:(CHRNB2/4)2 and HS (high agonist sensitivity) with a (CHRNA2)2:(CHRNB2/4)3 stoichiometries; the subtypes differ in their subunit binding interfaces which are involved in ligand binding.

It is found in the synaptic cell membrane. It localises to the cell membrane. It carries out the reaction Ca(2+)(in) = Ca(2+)(out). The catalysed reaction is K(+)(in) = K(+)(out). It catalyses the reaction Na(+)(in) = Na(+)(out). Its function is as follows. Component of neuronal acetylcholine receptors (nAChRs) that function as pentameric, ligand-gated cation channels with high calcium permeability among other activities. nAChRs are excitatory neurotrasnmitter receptors formed by a collection of nAChR subunits known to mediate synaptic transmission in the nervous system and the neuromuscular junction. Each nAchR subunit confers differential attributes to channel properties, including activation, deactivation and desensitization kinetics, pH sensitivity, cation permeability, and binding to allosteric modulators. CHRNA2 forms heteropentameric neuronal acetylcholine receptors with CHRNB2 and CHRNB4 and plays a role in nicotine dependence. This Mus musculus (Mouse) protein is Neuronal acetylcholine receptor subunit alpha-2 (Chrna2).